A 1070-amino-acid polypeptide reads, in one-letter code: DNA-directed RNA polymerase subunit beta (1070 aa).

It belongs to the RNA polymerase beta chain family. In plastids the minimal PEP RNA polymerase catalytic core is composed of four subunits: alpha, beta, beta', and beta''. When a (nuclear-encoded) sigma factor is associated with the core the holoenzyme is formed, which can initiate transcription.

It is found in the plastid. Its subcellular location is the chloroplast. The enzyme catalyses RNA(n) + a ribonucleoside 5'-triphosphate = RNA(n+1) + diphosphate. Its function is as follows. DNA-dependent RNA polymerase catalyzes the transcription of DNA into RNA using the four ribonucleoside triphosphates as substrates. This chain is DNA-directed RNA polymerase subunit beta, found in Liriodendron tulipifera (Tuliptree).